We begin with the raw amino-acid sequence, 361 residues long: MTRAFNFSAGPATLPESVLRQAQAEMLDWHGSGASIVEMSHRGAEFMSVAAEAEADLRRLLDIPEDYAVLFLSGGATTQQALIPLNFAAPGQRADYVVSGHWGKTAVKQAGVYVDVNIAASSEANGYRELPARADWQLSPDAAYVHLTANETIHGVEFRDVPDTGNVPLIADFSSSIASEPLDVRRYGVIYAGAQKNLGPVGIAVMIIRLDLLERSGQPRADIFDYRSHVARDSMLNTPPTWNWYLAGLVFKWMLAEGGVAEFAKRNAAKAALVYGAIDGSGGFYRNEVAHAARSRMNIPFFLPDAELDARFVAEAKAAGLLALKGHKVVGGIRASLYNAMPLAGAEALVAFMADFQQRHG.

Arg42 provides a ligand contact to L-glutamate. Residues 76-77 (AT), Trp102, Thr152, Asp172, and Gln195 each bind pyridoxal 5'-phosphate. An N6-(pyridoxal phosphate)lysine modification is found at Lys196. 237-238 (NT) contacts pyridoxal 5'-phosphate.

It belongs to the class-V pyridoxal-phosphate-dependent aminotransferase family. SerC subfamily. Homodimer. Pyridoxal 5'-phosphate serves as cofactor.

It localises to the cytoplasm. The catalysed reaction is O-phospho-L-serine + 2-oxoglutarate = 3-phosphooxypyruvate + L-glutamate. It catalyses the reaction 4-(phosphooxy)-L-threonine + 2-oxoglutarate = (R)-3-hydroxy-2-oxo-4-phosphooxybutanoate + L-glutamate. The protein operates within amino-acid biosynthesis; L-serine biosynthesis; L-serine from 3-phospho-D-glycerate: step 2/3. It functions in the pathway cofactor biosynthesis; pyridoxine 5'-phosphate biosynthesis; pyridoxine 5'-phosphate from D-erythrose 4-phosphate: step 3/5. Catalyzes the reversible conversion of 3-phosphohydroxypyruvate to phosphoserine and of 3-hydroxy-2-oxo-4-phosphonooxybutanoate to phosphohydroxythreonine. The sequence is that of Phosphoserine aminotransferase from Stenotrophomonas maltophilia (strain R551-3).